Here is a 295-residue protein sequence, read N- to C-terminus: SPX domain-containing protein 1 (295 aa).

In terms of domain architecture, SPX spans 1-166; sequence MKFGKSLSSQ…GALIRLPFIQ (166 aa). Positions 199–227 are disordered; the sequence is LSVSSEDGRGDSTNEDKPSNPSSSLVNGG. Over residues 204-216 the composition is skewed to basic and acidic residues; the sequence is EDGRGDSTNEDKP.

Interacts (via SPX domain) with PHR2 (via C-terminus). Interacts with RLI1 in the nucleus to prevents its positive regulation of leaf inclination during phosphate (Pi) starvation. As to expression, predominantly expressed in roots and leaves. Localized in leaves lamina joints.

The protein localises to the nucleus. In terms of biological role, involved in plant adaptation to phosphate (Pi) starvation. Inhibits PHR2 DNA-binding activity via a Pi-dependent protein interaction. Suppresses the regulation on expression of PT2 by PHR2 and accumulation of shoot Pi. Optimizes growth under phosphate-limited conditions through a negative feedback loop of the PSI (phosphate starvation-induced) signaling pathway. Regulates the expression of SPX2, SPX3 and SPX5. May be an important link between signal transduction pathways related to phosphate starvation and cold stress. Together with SPX2, plays a negative role in the regulation of leaf inclination by preventing RLI1 transcription factor activity in Pi depleted conditions. In Oryza sativa subsp. japonica (Rice), this protein is SPX domain-containing protein 1.